We begin with the raw amino-acid sequence, 376 residues long: N-acetyldiaminopimelate deacetylase (376 aa).

The active site involves D69. E128 serves as the catalytic Proton acceptor.

The protein belongs to the peptidase M20A family. N-acetyldiaminopimelate deacetylase subfamily.

It carries out the reaction N-acetyl-(2S,6S)-2,6-diaminopimelate + H2O = (2S,6S)-2,6-diaminopimelate + acetate. It participates in amino-acid biosynthesis; L-lysine biosynthesis via DAP pathway; LL-2,6-diaminopimelate from (S)-tetrahydrodipicolinate (acetylase route): step 3/3. In terms of biological role, catalyzes the conversion of N-acetyl-diaminopimelate to diaminopimelate and acetate. The polypeptide is N-acetyldiaminopimelate deacetylase (Streptococcus pneumoniae (strain 70585)).